We begin with the raw amino-acid sequence, 530 residues long: Tetrahydroberberine oxidase (530 aa).

Positions Met-1 to Ala-24 are cleaved as a signal peptide. The cysteines at positions 36 and 94 are disulfide-linked. Residue Asn-51 is glycosylated (N-linked (GlcNAc...) asparagine). The region spanning Thr-72 to Val-246 is the FAD-binding PCMH-type domain. Positions His-109 to Cys-171 form a cross-link, 6-(S-cysteinyl)-8alpha-(pros-histidyl)-FAD (His-Cys). Residue Asn-483 is glycosylated (N-linked (GlcNAc...) asparagine).

The protein belongs to the oxygen-dependent FAD-linked oxidoreductase family. Requires FAD as cofactor. Post-translationally, the FAD cofactor is bound via a bicovalent 6-S-cysteinyl, 8alpha-N1-histidyl FAD linkage.

The catalysed reaction is (S)-canadine + 2 O2 + H(+) = berberine + 2 H2O2. In terms of biological role, catalyzes the oxidation of different tetrahydroprotoberberines, such as (S)-canadine, (S)-scoulerine and (S)-corypalmine. Catalyzes the oxidation of (S)-coreximine and (S)-tetrahydropalmatine. Catalyzes the oxidation of different 1-benzylisoquinoline alkaloids, such as (S)-norreticuline, (S)-nororientaline, (S)-coclaurine and (S)-norisoorientaline. Exhibits strict specificity for the (S)-enantiomer of tetrahydroprotoberbirines and 1-benzylisoquinoline alkaloids. This chain is Tetrahydroberberine oxidase, found in Berberis wilsoniae (Mrs Wilson's barberry).